The primary structure comprises 932 residues: MTEFLPFVARHIGPRHEDERAMLAALGLPSMETLITQAVPASIRLNRALNLPAALSEADALAELGTIMGRNVVKKSFIGAGYHGVHTPPVIQRNLFENPAWYTAYTPYQSEISQGRLELLFHFQTLVAELTGLPVACASLLDEATAVAEAIGVACRHHRDKRSRILLAGELHPQTVDVVNTRAEPLGWEIATGSDVDDNTAAIVVPWPDTRGVYGDFAKVIADAKAKGALVIAVADPLALTIMEAPARWGADMAVGSMQRYGVPMGFGGPHAAYLAVSEALTRIIPGRIVGQSVDAHGRAAYRLALQTREQHIRRDKATSNICTAQALLANMAAAFAIWHGPAGLQAIATRVAALAARFAAALKAAGVEIAGESLFDTVTAKVPGKAAAIAAEADKGGRLIRIIDADTVGVTFDETSTEEDLTALASLFGAKPVGGDTVLVPGKERGEGFLTQEVFHSHRSETEMMRFLRRLVDKDLALDRAMIPLGSCTMKLNAAAEMMPVSWNTVANLHPFAPAEQVQGYAKMTSDLEAWLCEITGFAGVSLQPNAGSQGEYAGLMAIRHYHQARGQGHRNICLIPSSAHGTNPASASMAGMSVVVVNCRPDGDIDIDDLKAKAEKHRDNLAAFMITYPSTYGVFEEGIKAFCEIVHDNGGQVYFDGANLNALVGLARPADIGADVCHMNLHKTFCIPHGGGGPGVGPIGVAKHLVPYLPGHVEAGSEHAVAAAQFGSASILVITWMYIRMMGGAGLKKATEAAILNANYIAHRLKGVYPILYTGAHDRVAHECIVDTRVLKDSAGITVEDVAKRLIDYGFHAPTMSWPVAGTLMIEPTESEPKLEIDRLCDAMIAIAGEAKKVADGVWPADDNPLANAPHTASDTLATEWKHPYTREEAVFPGGAFDPTAKYWPPVSRVDNVGGDRNLICSCPPVAAYG.

N6-(pyridoxal phosphate)lysine is present on Lys685.

It belongs to the GcvP family. The glycine cleavage system is composed of four proteins: P, T, L and H. It depends on pyridoxal 5'-phosphate as a cofactor.

It carries out the reaction N(6)-[(R)-lipoyl]-L-lysyl-[glycine-cleavage complex H protein] + glycine + H(+) = N(6)-[(R)-S(8)-aminomethyldihydrolipoyl]-L-lysyl-[glycine-cleavage complex H protein] + CO2. In terms of biological role, the glycine cleavage system catalyzes the degradation of glycine. The P protein binds the alpha-amino group of glycine through its pyridoxal phosphate cofactor; CO(2) is released and the remaining methylamine moiety is then transferred to the lipoamide cofactor of the H protein. This Brucella suis (strain ATCC 23445 / NCTC 10510) protein is Glycine dehydrogenase (decarboxylating).